Here is a 143-residue protein sequence, read N- to C-terminus: Transcriptional regulator MraZ (143 aa).

2 SpoVT-AbrB domains span residues 5 to 47 (EYQH…SLEE) and 76 to 119 (AAEV…DKSK).

The protein belongs to the MraZ family. As to quaternary structure, forms oligomers.

It is found in the cytoplasm. Its subcellular location is the nucleoid. The polypeptide is Transcriptional regulator MraZ (Acetivibrio thermocellus (strain ATCC 27405 / DSM 1237 / JCM 9322 / NBRC 103400 / NCIMB 10682 / NRRL B-4536 / VPI 7372) (Clostridium thermocellum)).